The sequence spans 159 residues: uncharacterized protein (159 aa).

It belongs to the mimivirus L761/L899 family.

This is an uncharacterized protein from Acanthamoeba polyphaga mimivirus (APMV).